The sequence spans 486 residues: MPRPAPARRLPGLLLLLWPLLLLPSAAPDPVARPGFRRLETRGPGGSPGRRPSPAAPDGAPASGTSEPGRARGAGVCKSRPLDLVFIIDSSRSVRPLEFTKVKTFVSRIIDTLDIGPADTRVAVVNYASTVKIEFQLQAYTDKQSLKQAVGRITPLSTGTMSGLAIQTAMDEAFTVEAGAREPSSNIPKVAIIVTDGRPQDQVNEVAARAQASGIELYAVGVDRADMASLKMMASEPLEEHVFYVETYGVIEKLSSRFQETFCALDPCVLGTHQCQHVCISDGEGKHHCECSQGYTLNADKKTCSALDRCALNTHGCEHICVNDRSGSYHCECYEGYTLNEDRKTCSAQDKCALGTHGCQHICVNDRTGSHHCECYEGYTLNADKKTCSVRDKCALGSHGCQHICVSDGAASYHCDCYPGYTLNEDKKTCSATEEARRLVSTEDACGCEATLAFQDKVSSYLQRLNTKLDDILEKLKINEYGQIHR.

Residues 1–28 (MPRPAPARRLPGLLLLLWPLLLLPSAAP) form the signal peptide. The segment at 32-75 (ARPGFRRLETRGPGGSPGRRPSPAAPDGAPASGTSEPGRARGAG) is disordered. The segment covering 49–64 (GRRPSPAAPDGAPASG) has biased composition (low complexity). One can recognise a VWFA domain in the interval 83–258 (DLVFIIDSSR…GVIEKLSSRF (176 aa)). Position 198 is an omega-N-methylarginine (Arg198). 4 consecutive EGF-like domains span residues 264 to 305 (ALDP…KTCS), 306 to 347 (ALDR…KTCS), 348 to 389 (AQDK…KTCS), and 390 to 431 (VRDK…KTCS). Disulfide bonds link Cys268-Cys279, Cys275-Cys289, Cys291-Cys304, Cys310-Cys321, Cys317-Cys331, Cys333-Cys346, Cys352-Cys363, Cys359-Cys373, Cys375-Cys388, Cys394-Cys405, Cys401-Cys415, and Cys417-Cys430. Phosphoserine; by FAM20C is present on Ser441. Thr442 carries the post-translational modification Phosphothreonine; by FAM20C. A coiled-coil region spans residues 456–480 (DKVSSYLQRLNTKLDDILEKLKINE).

Can form homooligomers (monomers, dimers, trimers and tetramers) and heterooligomers with matrilin-1. Interacts with COMP. Component of a complex containing at least CRELD2, MANF, MATN3 and PDIA4. As to expression, expressed only in cartilaginous tissues, such as vertebrae, ribs and shoulders.

The protein localises to the secreted. In terms of biological role, major component of the extracellular matrix of cartilage and may play a role in the formation of extracellular filamentous networks. The protein is Matrilin-3 (MATN3) of Homo sapiens (Human).